Reading from the N-terminus, the 329-residue chain is Ankyrin repeat and SOCS box protein 5 (329 aa).

ANK repeat units lie at residues 69–98, 102–131, 135–164, 167–196, 200–229, and 232–261; these read ADRS…NVNA, DHIT…NVNA, DGVT…KAQL, CLPS…DVDQ, HLGT…DVQK, and YWDT…DINA. The 52-residue stretch at 278 to 329 folds into the SOCS box domain; it reads MVERILLQHEATPSSLCQLCRLCIRNYIGRPRLHLIPQLQLPTLLQNFLQYR.

This sequence belongs to the ankyrin SOCS box (ASB) family. As to expression, expressed in endothelial and smooth muscle cells of collateral arteries as well as in satellite cells.

It functions in the pathway protein modification; protein ubiquitination. In terms of biological role, may be a substrate-recognition component of a SCF-like ECS (Elongin-Cullin-SOCS-box protein) E3 ubiquitin-protein ligase complex which mediates the ubiquitination and subsequent proteasomal degradation of target proteins. May play a role in the initiation of arteriogenesis. The sequence is that of Ankyrin repeat and SOCS box protein 5 (ASB5) from Oryctolagus cuniculus (Rabbit).